A 364-amino-acid polypeptide reads, in one-letter code: Fructose-bisphosphate aldolase B (364 aa).

A2 carries the N-acetylalanine modification. K13 bears the N6-succinyllysine mark. S36 is subject to Phosphoserine. T39 bears the Phosphothreonine mark. Position 43 (R43) interacts with beta-D-fructose 1,6-bisphosphate. Residue T119 is modified to Phosphothreonine. K121 bears the N6-succinyllysine mark. The residue at position 132 (S132) is a Phosphoserine. E188 acts as the Proton acceptor in catalysis. K230 acts as the Schiff-base intermediate with dihydroxyacetone-P in catalysis. S272, S276, S299, and S301 each carry phosphoserine. 272–274 is a binding site for beta-D-fructose 1,6-bisphosphate; it reads SGG. Position 304 (R304) interacts with beta-D-fructose 1,6-bisphosphate. Residue S309 is modified to Phosphoserine. K317 carries the post-translational modification N6-succinyllysine.

This sequence belongs to the class I fructose-bisphosphate aldolase family. Homotetramer. Interacts with BBS1, BBS2, BBS4 and BBS7. Forms a ternary complex with G6PD and TP53; this interaction is direct.

It is found in the cytoplasm. The protein resides in the cytosol. The protein localises to the cytoskeleton. Its subcellular location is the microtubule organizing center. It localises to the centrosome. It is found in the centriolar satellite. It catalyses the reaction beta-D-fructose 1,6-bisphosphate = D-glyceraldehyde 3-phosphate + dihydroxyacetone phosphate. The catalysed reaction is beta-D-fructose 1-phosphate = D-glyceraldehyde + dihydroxyacetone phosphate. Its pathway is carbohydrate degradation; glycolysis; D-glyceraldehyde 3-phosphate and glycerone phosphate from D-glucose: step 4/4. It participates in carbohydrate biosynthesis; gluconeogenesis. The protein operates within carbohydrate metabolism; fructose metabolism. Its function is as follows. Catalyzes the aldol cleavage of fructose 1,6-biphosphate to form two triosephosphates dihydroxyacetone phosphate and D-glyceraldehyde 3-phosphate in glycolysis as well as the reverse stereospecific aldol addition reaction in gluconeogenesis. In fructolysis, metabolizes fructose 1-phosphate derived from the phosphorylation of dietary fructose by fructokinase into dihydroxyacetone phosphate and D-glyceraldehyde. Acts as an adapter independently of its enzymatic activity, exerts a tumor suppressor role by stabilizing the ternary complex with G6PD and TP53 to inhibit G6PD activity and keep oxidative pentose phosphate metabolism in check. This chain is Fructose-bisphosphate aldolase B (ALDOB), found in Bos taurus (Bovine).